We begin with the raw amino-acid sequence, 189 residues long: Cell division protein SepF (189 aa).

Residues 25–70 are disordered; that stretch reads ESRVQQQAVKPSNSRPAQQEPVRDIKQPRLVSSSSQHVTNTPSSNE. Composition is skewed to polar residues over residues 27–41 and 54–70; these read RVQQ…SRPA and LVSS…SSNE.

Belongs to the SepF family. In terms of assembly, homodimer. Interacts with FtsZ.

It is found in the cytoplasm. Cell division protein that is part of the divisome complex and is recruited early to the Z-ring. Probably stimulates Z-ring formation, perhaps through the cross-linking of FtsZ protofilaments. Its function overlaps with FtsA. The polypeptide is Cell division protein SepF (Streptococcus gordonii (strain Challis / ATCC 35105 / BCRC 15272 / CH1 / DL1 / V288)).